The chain runs to 266 residues: Luciferase (266 aa).

A helical membrane pass occupies residues G22–I41.

It belongs to the fungal luciferase family.

The protein resides in the membrane. It carries out the reaction 3-hydroxyhispidin + O2 = (E)-caffeoylpyruvate + hnu + CO2. The enzyme catalyses 3-hydroxyhispidin + O2 = 4-[(E)-2-(3,4-dihydroxyphenyl)ethenyl]-1,7-dihydroxy-2,3,5-trioxabicyclo[2.2.2]oct-7-en-6-one. Its function is as follows. Luciferase; part of the gene cluster that mediates the fungal bioluminescence cycle. Uses the fungal luciferin 3-hydroxyhispidin as a substrate to produce an endoperoxide as a high-energy intermediate with decomposition that yields oxyluciferin (also known as caffeoylpyruvate) and light emission. The fungal bioluminescence cycle begins with the hispidin synthetase that catalyzes the formation of hispidin which is further hydroxylated by the hispidin-3-hydroxylase, yielding the fungal luciferin 3-hydroxyhispidin. The luciferase then produces an endoperoxide as a high-energy intermediate with decomposition that yields oxyluciferin and light emission. Oxyluciferin can be recycled to caffeic acid by caffeoylpyruvate hydrolase. This is Luciferase from Armillaria gallica (Bulbous honey fungus).